Consider the following 170-residue polypeptide: Cathelicidin antimicrobial peptide (170 aa).

An N-terminal signal peptide occupies residues 1–30 (MKTQRDGHSLGRWSLVLLLLGLVMPLAIVA). Positions 31 to 131 (QVLSYKEAVL…DISCDKDNKR (101 aa)) are cleaved as a propeptide — cathelin-like domain (CLD). 2 disulfides stabilise this stretch: C86/C97 and C108/C125. The interval 150-162 (FKRIVQRIKDFLR) is active core.

Belongs to the cathelicidin family. As to quaternary structure, monomer, homodimer or homotrimer (in vitro). Oligomerizes as tetra- or hexamer in solution (in vitro). Proteolytically cleaved by proteinase PRTN3 into antibacterial peptide LL-37. Proteolytically cleaved by cathepsin CTSG and neutrophil elastase ELANE. In terms of processing, resistant to proteolytic degradation in solution, and when bound to both zwitterionic (mimicking mammalian membranes) and negatively charged membranes (mimicking bacterial membranes). Post-translationally, after secretion onto the skin surface, the CAMP gene product is processed by a serine protease-dependent mechanism into multiple novel antimicrobial peptides distinct from and shorter than cathelicidin LL-37. These peptides show enhanced antimicrobial action, acquiring the ability to kill skin pathogens such as S.aureus, E.coli and C.albicans. These peptides have lost the ability to stimulate CXCL8/IL8 release from keratinocytes. The peptides act synergistically, killing bacteria at lower concentrations when present together, and maintain activity at increased salt condition.

It localises to the secreted. The protein localises to the vesicle. In terms of biological role, antimicrobial protein that is an integral component of the innate immune system. Binds to bacterial lipopolysaccharides (LPS). Acts via neutrophil N-formyl peptide receptors to enhance the release of CXCL2. Postsecretory processing generates multiple cathelicidin antimicrobial peptides with various lengths which act as a topical antimicrobial defense in sweat on skin. The unprocessed precursor form, cathelicidin antimicrobial peptide, inhibits the growth of Gram-negative E.coli and E.aerogenes with efficiencies comparable to that of the mature peptide LL-37 (in vitro). Antimicrobial peptide that is an integral component of the innate immune system. Binds to bacterial lipopolysaccharides (LPS). Causes membrane permeabilization by forming transmembrane pores (in vitro). Causes lysis of E.coli. Exhibits antimicrobial activity against Gram-negative bacteria such as P.aeruginosa, S.typhimurium, E.aerogenes, E.coli and P.syringae, Gram-positive bacteria such as L.monocytogenes, S.epidermidis, S.pyogenes and S.aureus, as well as vancomycin-resistant enterococci (in vitro). Exhibits antimicrobial activity against methicillin-resistant S.aureus, P.mirabilis, and C.albicans in low-salt media, but not in media containing 100 mM NaCl (in vitro). Forms chiral supramolecular assemblies with quinolone signal (PQS) molecules of P.aeruginosa, which may lead to interference of bacterial quorum signaling and perturbance of bacterial biofilm formation. May form supramolecular fiber-like assemblies on bacterial membranes. Induces cytokine and chemokine producation as well as TNF/TNFA and CSF2/GMCSF production in normal human keratinocytes. Exhibits hemolytic activity against red blood cells. Functionally, exhibits antimicrobial activity against E.coli and B.megaterium (in vitro). The polypeptide is Cathelicidin antimicrobial peptide (Pan troglodytes (Chimpanzee)).